The primary structure comprises 83 residues: Putative membrane protein insertion efficiency factor (83 aa).

A disordered region spans residues 62–83 (KGGYDPVPPKSVKSAGNSKDSK).

Belongs to the UPF0161 family.

It localises to the cell inner membrane. Could be involved in insertion of integral membrane proteins into the membrane. This Chlorobaculum tepidum (strain ATCC 49652 / DSM 12025 / NBRC 103806 / TLS) (Chlorobium tepidum) protein is Putative membrane protein insertion efficiency factor.